Here is a 249-residue protein sequence, read N- to C-terminus: DNA repair protein RecO (249 aa).

This sequence belongs to the RecO family.

Functionally, involved in DNA repair and RecF pathway recombination. The chain is DNA repair protein RecO from Exiguobacterium sibiricum (strain DSM 17290 / CCUG 55495 / CIP 109462 / JCM 13490 / 255-15).